Reading from the N-terminus, the 441-residue chain is Serine/threonine-protein phosphatase 2A activator 1 (441 aa).

2 stretches are compositionally biased toward polar residues: residues 66-75 and 421-432; these read NIPPSNTTHS and QRQDDLNSTTYR. Disordered stretches follow at residues 66-100 and 421-441; these read NIPP…SSNQ and QRQD…LGRN.

The protein belongs to the PTPA-type PPIase family.

It localises to the cytoplasm. It is found in the nucleus. It carries out the reaction [protein]-peptidylproline (omega=180) = [protein]-peptidylproline (omega=0). Functionally, PPIases accelerate the folding of proteins. It catalyzes the cis-trans isomerization of proline imidic peptide bonds in oligopeptides. Acts as a regulatory subunit for PP2A-like phosphatases modulating their activity or substrate specificity, probably by inducing a conformational change in the catalytic subunit, a direct target of the PPIase. Can reactivate inactive phosphatase PP2A-phosphatase methylesterase complexes (PP2Ai) in presence of ATP and Mg(2+) by dissociating the inactive form from the complex. The protein is Serine/threonine-protein phosphatase 2A activator 1 (RRD1) of Debaryomyces hansenii (strain ATCC 36239 / CBS 767 / BCRC 21394 / JCM 1990 / NBRC 0083 / IGC 2968) (Yeast).